Here is a 499-residue protein sequence, read N- to C-terminus: Glycerol kinase (499 aa).

Thr13 lines the ADP pocket. 3 residues coordinate ATP: Thr13, Thr14, and Ser15. Thr13 is a binding site for sn-glycerol 3-phosphate. Arg17 is a binding site for ADP. Positions 83, 84, 135, and 245 each coordinate sn-glycerol 3-phosphate. Glycerol-binding residues include Arg83, Glu84, Tyr135, Asp245, and Gln246. 2 residues coordinate ADP: Thr267 and Gly310. The ATP site is built by Thr267, Gly310, Gln314, and Gly411. ADP contacts are provided by Gly411 and Asn415.

Belongs to the FGGY kinase family.

It carries out the reaction glycerol + ATP = sn-glycerol 3-phosphate + ADP + H(+). It functions in the pathway polyol metabolism; glycerol degradation via glycerol kinase pathway; sn-glycerol 3-phosphate from glycerol: step 1/1. Its activity is regulated as follows. Inhibited by fructose 1,6-bisphosphate (FBP). Its function is as follows. Key enzyme in the regulation of glycerol uptake and metabolism. Catalyzes the phosphorylation of glycerol to yield sn-glycerol 3-phosphate. This Xanthomonas euvesicatoria pv. vesicatoria (strain 85-10) (Xanthomonas campestris pv. vesicatoria) protein is Glycerol kinase.